Here is a 193-residue protein sequence, read N- to C-terminus: Interferon epsilon (193 aa).

Positions 1-21 (MINKSFFEIMLVLLASSTGFS) are cleaved as a signal peptide. Cysteines 53 and 163 form a disulfide. Residue N139 is glycosylated (N-linked (GlcNAc...) asparagine).

It belongs to the alpha/beta interferon family.

It localises to the secreted. In terms of biological role, type I interferon required for maintaining basal levels of IFN-regulated genes, including 2'-5'-oligoadenylate synthetase, IRF7 and ISG15, in the female reproductive tract. Directly mediates protection against viral and bacterial genital infections. The protein is Interferon epsilon (IFNE) of Sus scrofa (Pig).